The sequence spans 200 residues: Recombination protein RecR (200 aa).

The segment at Cys58–Cys73 adopts a C4-type zinc-finger fold. A Toprim domain is found at Gly81–Ala176.

The protein belongs to the RecR family.

Functionally, may play a role in DNA repair. It seems to be involved in an RecBC-independent recombinational process of DNA repair. It may act with RecF and RecO. This chain is Recombination protein RecR, found in Amoebophilus asiaticus (strain 5a2).